The chain runs to 306 residues: Pantothenate kinase (306 aa).

90 to 97 (GSVAVGKS) provides a ligand contact to ATP.

This sequence belongs to the prokaryotic pantothenate kinase family.

Its subcellular location is the cytoplasm. The enzyme catalyses (R)-pantothenate + ATP = (R)-4'-phosphopantothenate + ADP + H(+). Its pathway is cofactor biosynthesis; coenzyme A biosynthesis; CoA from (R)-pantothenate: step 1/5. The protein is Pantothenate kinase of Lactococcus lactis subsp. cremoris (strain SK11).